The sequence spans 175 residues: Anterior gradient protein 2 homolog (175 aa).

An N-terminal signal peptide occupies residues M1–A20. Residues R21 to L40 form a required to promote cell adhesion region. 2 short sequence motifs (homodimer stabilization; interchain) span residues S45–W54 and E60–T67.

This sequence belongs to the AGR family. As to quaternary structure, monomer and homodimer. Interacts with LYPD3 and DAG1 (alphaDAG1). Interacts with MUC2; disulfide-linked.

It localises to the secreted. It is found in the endoplasmic reticulum. In terms of biological role, required for MUC2 post-transcriptional synthesis and secretion. May play a role in the production of mucus by intestinal cells. Proto-oncogene that may play a role in cell migration, cell differentiation and cell growth. Promotes cell adhesion. In Pongo abelii (Sumatran orangutan), this protein is Anterior gradient protein 2 homolog (AGR2).